The sequence spans 1466 residues: ABC transporter G family member 40 (1466 aa).

The interval 1-21 (MSHRHHAALVASASGRSPSWG) is disordered. The ABC transporter 1 domain maps to 176–449 (GLIGQFGSSN…FEASGFRCPQ (274 aa)). Residue 209–216 (GPPSSGKS) coordinates ATP. The region spanning 527 to 740 (ESLKAVLCRE…SQNAISINEF (214 aa)) is the ABC transmembrane type-2 1 domain. 6 consecutive transmembrane segments (helical) span residues 545–565 (FLYI…MTVF), 581–601 (FLGA…SELN), 633–653 (VPVS…VMGF), 664–684 (FLAF…LGAI), 690–710 (IAIS…GFVI), and 776–796 (FWLS…LYIL). Positions 821–831 (YTETRNEEHRS) are enriched in basic and acidic residues. The segment at 821-851 (YTETRNEEHRSRTSTTTSSIPTSANGEGNRP) is disordered. A compositionally biased stretch (low complexity) spans 833-843 (TSTTTSSIPTS). One can recognise an ABC transporter 2 domain in the interval 865 to 1117 (LCFNHLNYYV…KLVEYFETIL (253 aa)). Residue 910 to 917 (GVSGAGKT) coordinates ATP. One can recognise an ABC transmembrane type-2 2 domain in the interval 1190–1404 (IQCVANLWKQ…TIYGVIASQF (215 aa)). 7 helical membrane-spanning segments follow: residues 1209 to 1229 (YNSL…TVFW), 1241 to 1261 (LYNL…TNCM), 1297 to 1317 (FIYN…MIGY), 1327 to 1347 (FLFF…MLVA), 1355 to 1375 (ANIL…FLIF), 1396 to 1416 (IYGV…VPGG), and 1435 to 1455 (FLGY…LIFG).

It belongs to the ABC transporter superfamily. ABCG family. PDR (TC 3.A.1.205) subfamily.

Its subcellular location is the membrane. The chain is ABC transporter G family member 40 from Oryza sativa subsp. japonica (Rice).